A 165-amino-acid polypeptide reads, in one-letter code: Nucleotide-binding protein A9601_05361 (165 aa).

Belongs to the YajQ family.

Nucleotide-binding protein. This is Nucleotide-binding protein A9601_05361 from Prochlorococcus marinus (strain AS9601).